The following is a 129-amino-acid chain: Transcriptional regulator WhiB2 (129 aa).

A disordered region spans residues 23–45 (SHAPHIDTGSTPTGAAGRPQLSL). The 4Fe-4S Wbl-type domain occupies 66-123 (LCAQTDPEAFFPEKGGSTREAKRICQGCEVRDACLEYALAHDERFGIWGGLSERERRR). The [4Fe-4S] cluster site is built by Cys-67, Cys-90, Cys-93, and Cys-99.

It belongs to the WhiB family. [4Fe-4S] cluster serves as cofactor. In terms of processing, the Fe-S cluster can be nitrosylated by nitric oxide (NO). Post-translationally, upon Fe-S cluster removal intramolecular disulfide bonds are formed.

The protein resides in the cytoplasm. Acts as a transcriptional regulator. Probably redox-responsive. The apo- but not holo-form probably binds DNA. The sequence is that of Transcriptional regulator WhiB2 (whiB2) from Mycolicibacterium smegmatis (strain ATCC 700084 / mc(2)155) (Mycobacterium smegmatis).